Reading from the N-terminus, the 680-residue chain is DNA-directed RNA polymerase subunit beta' (680 aa).

Zn(2+) is bound by residues Cys69, Cys71, Cys87, and Cys90. Asp489, Asp491, and Asp493 together coordinate Mg(2+).

Belongs to the RNA polymerase beta' chain family. RpoC1 subfamily. In terms of assembly, in plastids the minimal PEP RNA polymerase catalytic core is composed of four subunits: alpha, beta, beta', and beta''. When a (nuclear-encoded) sigma factor is associated with the core the holoenzyme is formed, which can initiate transcription. Mg(2+) is required as a cofactor. Requires Zn(2+) as cofactor.

Its subcellular location is the plastid. The protein localises to the chloroplast. The enzyme catalyses RNA(n) + a ribonucleoside 5'-triphosphate = RNA(n+1) + diphosphate. Functionally, DNA-dependent RNA polymerase catalyzes the transcription of DNA into RNA using the four ribonucleoside triphosphates as substrates. This is DNA-directed RNA polymerase subunit beta' from Amborella trichopoda.